The following is a 442-amino-acid chain: Phosphoglucosamine mutase (442 aa).

The active-site Phosphoserine intermediate is S103. Mg(2+) is bound by residues S103, D241, D243, and D245. The residue at position 103 (S103) is a Phosphoserine.

Belongs to the phosphohexose mutase family. It depends on Mg(2+) as a cofactor. Post-translationally, activated by phosphorylation.

It catalyses the reaction alpha-D-glucosamine 1-phosphate = D-glucosamine 6-phosphate. In terms of biological role, catalyzes the conversion of glucosamine-6-phosphate to glucosamine-1-phosphate. This is Phosphoglucosamine mutase from Deinococcus deserti (strain DSM 17065 / CIP 109153 / LMG 22923 / VCD115).